The following is a 276-amino-acid chain: uncharacterized protein (276 aa).

Tyrosine 47 serves as the catalytic Proton donor. Histidine 110 serves as a coordination point for substrate.

Belongs to the aldo/keto reductase family.

The protein resides in the cytoplasm. The protein localises to the nucleus. This is an uncharacterized protein from Schizosaccharomyces pombe (strain 972 / ATCC 24843) (Fission yeast).